Here is a 278-residue protein sequence, read N- to C-terminus: MALKSFNPTTPSQRQLVIVDRAGLYKGKPVKTLTEGLSSKGGRNNLGRITVRFQGGGHKRTYRLVDFKRRKFDVEGTVERLEYDPNRTAFIALVNYADGEQAYILAPQRLAAGDKVIASDKAVDVKPGNTMPLQFIPVGSIIHNVEMKPGKGGQIARSAGTYAQLVGRDQGMAILRLNSGEQRLVHGSCLASIGAVSNPDHGNINDGKAGRSRWRGKRPHVRGVVMNPVDHPHGGGEGRTSGGRHPVTPWGKPTKGKRTRSNKSTDKFIMRSRHQRKK.

Residues 201–278 (HGNINDGKAG…IMRSRHQRKK (78 aa)) form a disordered region. Positions 210–221 (GRSRWRGKRPHV) are enriched in basic residues.

Belongs to the universal ribosomal protein uL2 family. Part of the 50S ribosomal subunit. Forms a bridge to the 30S subunit in the 70S ribosome.

Functionally, one of the primary rRNA binding proteins. Required for association of the 30S and 50S subunits to form the 70S ribosome, for tRNA binding and peptide bond formation. It has been suggested to have peptidyltransferase activity; this is somewhat controversial. Makes several contacts with the 16S rRNA in the 70S ribosome. This chain is Large ribosomal subunit protein uL2, found in Sinorhizobium fredii (strain NBRC 101917 / NGR234).